A 420-amino-acid polypeptide reads, in one-letter code: Carboxypeptidase A4 (420 aa).

The first 16 residues, 1–16, serve as a signal peptide directing secretion; it reads MKWLLFFGALIGAGIC. A propeptide spans 17-113 (activation peptide); sequence GRDKFFGDQV…EMQHNEGIER (97 aa). The a protein site is built by P69, V71, N118, Y122, H123, E126, and F162. A Peptidase M14 domain is found at 121–415; it reads AYHPLEAIYH…LGLKTIMEHV (295 aa). 2 residues coordinate Zn(2+): H180 and E183. An intrachain disulfide couples C249 to C272. N-linked (GlcNAc...) asparagine glycosylation occurs at N259. Residue H307 participates in Zn(2+) binding. E381 serves as the catalytic Proton donor/acceptor.

It belongs to the peptidase M14 family. Interacts with LXN. It depends on Zn(2+) as a cofactor.

The protein resides in the secreted. Its function is as follows. Metalloprotease that cleaves hydrophobic C-terminal residues with a preference for -Phe, -Leu, -Ile, -Met, -Tyr and -Val. May function in peptide hormone and/or neuropeptide catabolism. This chain is Carboxypeptidase A4 (Cpa4), found in Mus musculus (Mouse).